Reading from the N-terminus, the 1423-residue chain is Interphotoreceptor matrix proteoglycan 2 (1423 aa).

The N-terminal stretch at M1 to A27 is a signal peptide. Over E28–G1289 the chain is Extracellular. N150 is a glycosylation site (N-linked (GlcNAc...) asparagine). The region spanning T245–D358 is the SEA 1 domain. The hyaluronan-binding motif involved in chondroitin sulfate A-binding stretch occupies residues S265–Q273. N-linked (GlcNAc...) asparagine glycans are attached at residues N325 and N375. Disordered stretches follow at residues A423–V469, D522–A559, and T577–L602. Acidic residues predominate over residues S523–L532. Positions L537 to L546 are enriched in low complexity. Positions T577–V587 are enriched in basic and acidic residues. A glycan (N-linked (GlcNAc...) asparagine) is linked at N676. The tract at residues F886–R907 is disordered. Residues S889–S902 show a composition bias toward polar residues. The 114-residue stretch at R1083–Q1196 folds into the SEA 2 domain. N1128, N1142, and N1160 each carry an N-linked (GlcNAc...) asparagine glycan. EGF-like domains lie at Q1196–L1234 and N1237–E1279. 5 cysteine pairs are disulfide-bonded: C1200–C1211, C1205–C1222, C1240–C1253, C1247–C1263, and C1265–C1278. Positions R1266–R1274 are hyaluronan-binding motif involved in chondroitin sulfate C-binding. The helical transmembrane segment at I1290–A1310 threads the bilayer. Over R1311 to L1423 the chain is Cytoplasmic. Residues T1322–G1327 form a hyaluronan-binding motif involved in chondroitin sulfate C-binding region.

Post-translationally, highly glycosylated (N- and O-linked carbohydrates). Expressed in retina.

The protein localises to the photoreceptor outer segment membrane. The protein resides in the photoreceptor inner segment membrane. It is found in the secreted. Its subcellular location is the extracellular space. It localises to the extracellular matrix. The protein localises to the interphotoreceptor matrix. In terms of biological role, chondroitin sulfate- and hyaluronan-binding proteoglycan involved in the organization of interphotoreceptor matrix. The sequence is that of Interphotoreceptor matrix proteoglycan 2 (IMPG2) from Gallus gallus (Chicken).